The chain runs to 396 residues: Elongation factor Tu (396 aa).

The tr-type G domain maps to 10–206 (KPHVNIGTIG…AVDEYIPDPV (197 aa)). A G1 region spans residues 19-26 (GHVDHGKT). 19–26 (GHVDHGKT) lines the GTP pocket. Mg(2+) is bound at residue Thr26. The interval 62–66 (GITIN) is G2. A G3 region spans residues 83 to 86 (DAPG). GTP-binding positions include 83–87 (DAPGH) and 138–141 (NKSD). The tract at residues 138 to 141 (NKSD) is G4. Positions 176-178 (SGL) are G5.

The protein belongs to the TRAFAC class translation factor GTPase superfamily. Classic translation factor GTPase family. EF-Tu/EF-1A subfamily. Monomer.

The protein localises to the cytoplasm. It catalyses the reaction GTP + H2O = GDP + phosphate + H(+). Functionally, GTP hydrolase that promotes the GTP-dependent binding of aminoacyl-tRNA to the A-site of ribosomes during protein biosynthesis. This is Elongation factor Tu from Micrococcus luteus (strain ATCC 4698 / DSM 20030 / JCM 1464 / CCM 169 / CCUG 5858 / IAM 1056 / NBRC 3333 / NCIMB 9278 / NCTC 2665 / VKM Ac-2230) (Micrococcus lysodeikticus).